A 66-amino-acid polypeptide reads, in one-letter code: Beta-defensin 107A (66 aa).

The signal sequence occupies residues 1–22 (MKIFFFIFAALILLAQIFQART). 2 cysteine pairs are disulfide-bonded: Cys37–Cys51 and Cys41–Cys60.

Belongs to the beta-defensin family.

The protein localises to the secreted. In terms of biological role, has antibacterial activity. The sequence is that of Beta-defensin 107A (DEFB107A) from Hylobates lar (Lar gibbon).